A 726-amino-acid chain; its full sequence is MDAANLVMKSSLFSKSPCPLFSSKLIPRAPPSVFTLPSTFRPLVKCIQASFPPNPDSKKPSNNSTFTCSAVTSFPSQQSQPHAPSDAKLQLLISEFQSLVEPMDRVKRLLHYSTLLPPMDASFKTPENRVPGCTTQVWLNVSFDEAENRMKFLADSDSEITKGFCACLVSLLDGATPDEVLALKTEDLNALNVAGLNGKGSASRANTWHNVLVSMQKRTRALVAEREGRPRGELFPSLVITADGIQPQGSYAEAQARFLFPDESRVQKLASLLKEKKIGVVAHFYMDPEVQGVLTAAQKLWPHIHISDSLVMADKAVSMAKAGCEYISVLGVDFMSENVRAILDLAGFPEVGVYRMSDERIGCSLADAAASPAYLDYLKTASTSSPSLHVVYINTSLETKAYSHELVPTITCTSSNVVQTILQAFAEVPDLEVLYGPDTYMGSNIAELFTQMSTMTDEEISAIHPLHNRISIKSLLPRLHYFQDGTCIVHHLFGHEVVEKINEMYGDAFLTAHFEVPGEMFSLAMEAKKRGMGVVGSTSNILDFIKERVEESLNRNVDEHLQFVLGTESGMITAIVAAVGKLLGSADSSSGGAKVSVEIVFPVSSESVTRTSTGSPLDQNKVNIIPGVASGEGCSLHGGCASCPYMKMNSLSSLLKVCQSLPHGKAELSAYEAGRFSLRTPKGKQIADVGCEPVLHMRHFQATKRLPEQLINQILQPRDNGRSSSA.

A chloroplast-targeting transit peptide spans 1 to 67 (MDAANLVMKS…KKPSNNSTFT (67 aa)). Cys133 acts as the Cysteine persulfide intermediate in catalysis. His283 and Ser309 together coordinate iminosuccinate. [4Fe-4S] cluster is bound at residue Cys363. Residues 392-394 (YIN) and Ser414 each bind iminosuccinate. Cys487 contacts [4Fe-4S] cluster. Iminosuccinate-binding positions include 513-515 (HFE) and Thr538. Residue Cys643 coordinates [4Fe-4S] cluster.

The protein belongs to the quinolinate synthase family. Type 1 subfamily. In terms of assembly, homodimer. The cofactor is [4Fe-4S] cluster.

The protein resides in the plastid. It localises to the chloroplast. It carries out the reaction iminosuccinate + dihydroxyacetone phosphate = quinolinate + phosphate + 2 H2O + H(+). It participates in alkaloid biosynthesis; nicotine biosynthesis. Its pathway is cofactor biosynthesis; NAD(+) biosynthesis; quinolinate from iminoaspartate: step 1/1. Involved in the biosynthesis of pyridine alkaloid natural products, leading mainly to the production of anabasine, anatabine, nicotine and nornicotine, effective deterrents against herbivores with antiparasitic and pesticide properties (neurotoxins); nornicotine serves as the precursor in the synthesis of the carcinogen compound N'-nitrosonornicotine (NNN). Catalyzes the condensation of iminoaspartate with dihydroxyacetone phosphate to form quinolinate. The protein is Quinolinate synthase, chloroplastic of Nicotiana tabacum (Common tobacco).